Here is a 397-residue protein sequence, read N- to C-terminus: Erythromycin C-12 hydroxylase (397 aa).

74–75 (HE) is a substrate binding site. Heme is bound by residues H81 and R85. Q278 provides a ligand contact to substrate. Residue R279 coordinates heme. Residues 307–322 (RDSDAHDDPDRFDPSR) are compositionally biased toward basic and acidic residues. The disordered stretch occupies residues 307–326 (RDSDAHDDPDRFDPSRKSGG). The heme site is built by H337 and C339.

This sequence belongs to the cytochrome P450 family. Monomer. Requires heme b as cofactor.

It carries out the reaction erythromycin D + NADPH + O2 + H(+) = erythromycin C + NADP(+) + H2O. The protein operates within antibiotic biosynthesis; erythromycin biosynthesis. Functionally, responsible for the C-12 hydroxylation of the macrolactone ring of erythromycin. Thus, EryK catalyzes the hydroxylation of erythromycin D (ErD) at the C-12 position to produce erythromycin C (ErC). Erythromycin B (ErB) is not a substrate for this enzyme. This is Erythromycin C-12 hydroxylase (eryK) from Saccharopolyspora erythraea (strain ATCC 11635 / DSM 40517 / JCM 4748 / NBRC 13426 / NCIMB 8594 / NRRL 2338).